A 324-amino-acid polypeptide reads, in one-letter code: Phospho-N-acetylmuramoyl-pentapeptide-transferase (324 aa).

9 helical membrane passes run 13–33, 59–79, 85–105, 121–141, 143–163, 179–199, 201–221, 243–263, and 303–323; these read VLSA…IFIP, PTMG…IIGY, GMVV…DDIL, MILL…NIGT, IIIP…PLVV, IDGL…IVGF, TGHY…LGFL, AIAT…VGGI, and VKLV…GFIA.

Belongs to the glycosyltransferase 4 family. MraY subfamily. Mg(2+) is required as a cofactor.

It localises to the cell membrane. The catalysed reaction is UDP-N-acetyl-alpha-D-muramoyl-L-alanyl-gamma-D-glutamyl-meso-2,6-diaminopimeloyl-D-alanyl-D-alanine + di-trans,octa-cis-undecaprenyl phosphate = di-trans,octa-cis-undecaprenyl diphospho-N-acetyl-alpha-D-muramoyl-L-alanyl-D-glutamyl-meso-2,6-diaminopimeloyl-D-alanyl-D-alanine + UMP. It participates in cell wall biogenesis; peptidoglycan biosynthesis. In terms of biological role, catalyzes the initial step of the lipid cycle reactions in the biosynthesis of the cell wall peptidoglycan: transfers peptidoglycan precursor phospho-MurNAc-pentapeptide from UDP-MurNAc-pentapeptide onto the lipid carrier undecaprenyl phosphate, yielding undecaprenyl-pyrophosphoryl-MurNAc-pentapeptide, known as lipid I. The protein is Phospho-N-acetylmuramoyl-pentapeptide-transferase of Clostridium botulinum (strain Alaska E43 / Type E3).